A 238-amino-acid chain; its full sequence is Protein Iojap, chloroplastic (238 aa).

The N-terminal 66 residues, methionine 1–arginine 66, are a transit peptide targeting the chloroplast.

Belongs to the Iojap/RsfS family. As to quaternary structure, interacts with chloroplast ribosomal protein uL14c (rpl14).

Its subcellular location is the plastid. It is found in the chloroplast. May be a ribosome silencing factor (Potential). Involved in plastid biogenesis. The chain is Protein Iojap, chloroplastic (IJ) from Arabidopsis thaliana (Mouse-ear cress).